Reading from the N-terminus, the 2278-residue chain is Protein Ycf2 (2278 aa).

The protein belongs to the Ycf2 family.

It localises to the plastid. Its subcellular location is the chloroplast stroma. The protein localises to the chromoplast stroma. Probable ATPase of unknown function. Its presence in a non-photosynthetic plant (Epifagus virginiana) and experiments in tobacco indicate that it has an essential function which is probably not related to photosynthesis. The polypeptide is Protein Ycf2 (ycf2-A) (Solanum lycopersicum (Tomato)).